Consider the following 274-residue polypeptide: Penicillin-insensitive murein endopeptidase (274 aa).

The N-terminal stretch at 1-19 is a signal peptide; it reads MNKTAIALLALLASSASLA. 3 disulfide bridges follow: Cys44-Cys265, Cys187-Cys235, and Cys216-Cys223. Zn(2+) contacts are provided by His110, His113, Asp120, Asp147, His150, and His211. The segment at 227-274 is disordered; the sequence is PLPPPGDGCGAELQSWFEPPKPGTTKPEKKTPPPLPPSCQALLDEHVI.

The protein belongs to the peptidase M74 family. Dimer. Requires Zn(2+) as cofactor.

Its subcellular location is the periplasm. Murein endopeptidase that cleaves the D-alanyl-meso-2,6-diamino-pimelyl amide bond that connects peptidoglycan strands. Likely plays a role in the removal of murein from the sacculus. This is Penicillin-insensitive murein endopeptidase from Escherichia coli (strain ATCC 8739 / DSM 1576 / NBRC 3972 / NCIMB 8545 / WDCM 00012 / Crooks).